The following is a 352-amino-acid chain: Aliphatic aldoxime dehydratase (352 aa).

Ser-219 is a binding site for an aliphatic aldoxime. Residue His-299 participates in heme b binding. His-320 contacts an aliphatic aldoxime. His-320 is a catalytic residue.

Belongs to the heme-containing dehydratase family. As to quaternary structure, homodimer. Requires heme b as cofactor. Ca(2+) serves as cofactor.

It catalyses the reaction an aliphatic aldoxime = a nitrile + H2O. Its activity is regulated as follows. Active when the heme iron is in the ferrous state. Is very sensitive to AgNO(3), is also inhibited by hydroxylamine and phenylhydrazine, and hardly inhibited by thiol reagents. Not sensitive to chelating agents and serine-modifying reagents. Functionally, catalyzes the dehydration of aldoximes to their corresponding nitrile. Aliphatic aldoximes are more effective substrates than aromatic aldoximes. Shows high activity with butyraldoxime and acetaldoxime, but only weak activity with the aromatic aldoxime pyridine-2-aldoxime. Cannot use benzaldoxime, isonitrosoacetophenone and pyridine-4-aldoxime. Is involved in the metabolism of aldoxime in vivo. The protein is Aliphatic aldoxime dehydratase of Pseudomonas chlororaphis (Pseudomonas aureofaciens).